A 181-amino-acid polypeptide reads, in one-letter code: K99 fimbrial protein (181 aa).

Residues 1–22 form the signal peptide; that stretch reads MKKTLLAIILGGMAFATTNASA. Residues C38 and C79 are joined by a disulfide bond.

It belongs to the fimbrial protein family.

The protein resides in the fimbrium. In terms of biological role, fimbriae (also called pili), polar filaments radiating from the surface of the bacterium to a length of 0.5-1.5 micrometers and numbering 100-300 per cell, enable bacteria to colonize the epithelium of specific host organs. Its function is as follows. FanC is the main component of the K99 fimbriae. This chain is K99 fimbrial protein (fanC), found in Escherichia coli.